Consider the following 127-residue polypeptide: DNA-directed RNA polymerase subunit omega (127 aa).

It belongs to the RNA polymerase subunit omega family. In terms of assembly, the RNAP catalytic core consists of 2 alpha, 1 beta, 1 beta' and 1 omega subunit. When a sigma factor is associated with the core the holoenzyme is formed, which can initiate transcription.

It carries out the reaction RNA(n) + a ribonucleoside 5'-triphosphate = RNA(n+1) + diphosphate. Promotes RNA polymerase assembly. Latches the N- and C-terminal regions of the beta' subunit thereby facilitating its interaction with the beta and alpha subunits. This is DNA-directed RNA polymerase subunit omega from Rickettsia canadensis (strain McKiel).